A 706-amino-acid polypeptide reads, in one-letter code: Vitamin B12-dependent ribonucleoside-diphosphate reductase (706 aa).

An ATP-cone domain is found at 21-109; the sequence is AKVRRRDGTL…IYRQRRAELR (89 aa). Residues serine 191, 206–207, glycine 235, 389–393, and 534–538 each bind substrate; these read GC, NPCGE, and PTGTI. A disulfide bridge connects residues cysteine 207 and cysteine 402. Asparagine 389 (proton acceptor) is an active-site residue. Cysteine 391 (cysteine radical intermediate) is an active-site residue. Residue glutamate 393 is the Proton acceptor of the active site.

It belongs to the ribonucleoside diphosphate reductase class-2 family. The cofactor is adenosylcob(III)alamin.

It catalyses the reaction a 2'-deoxyribonucleoside 5'-diphosphate + [thioredoxin]-disulfide + H2O = a ribonucleoside 5'-diphosphate + [thioredoxin]-dithiol. Functionally, provides the precursors necessary for DNA synthesis. Catalyzes the biosynthesis of deoxyribonucleotides from the corresponding ribonucleotides. In Mycobacterium tuberculosis (strain ATCC 25618 / H37Rv), this protein is Vitamin B12-dependent ribonucleoside-diphosphate reductase (nrdZ).